A 763-amino-acid chain; its full sequence is Cadherin-like protein 26 (763 aa).

The first 20 residues, 1–20 (MDTRGCAWLLLLLSLPQGQS), serve as a signal peptide directing secretion. Cadherin domains are found at residues 21–140 (HQPL…APQF), 141–250 (PEKE…MPTF), 251–371 (MEDR…PPAF), and 370–478 (AFHP…APTL). The Extracellular segment spans residues 21-590 (HQPLHRSKRR…SECEEPSDTW (570 aa)). Asparagine 56, asparagine 60, and asparagine 146 each carry an N-linked (GlcNAc...) asparagine glycan. N-linked (GlcNAc...) asparagine glycans are attached at residues asparagine 394 and asparagine 440. Residues 591–611 (LLWWALSPVGAALMVLSAALL) form a helical membrane-spanning segment. Residues 612-763 (CLLRCSCTFG…AMCFTSRVPS (152 aa)) lie on the Cytoplasmic side of the membrane.

Homodimer. Component of a cadherin:catenin adhesion complex composed of at least of CDH26, beta-catenin/CTNNB1, alpha-catenin/CTNNA1 and p120 catenin/CTNND1. N-glycosylated.

The protein resides in the cell membrane. Cadherins are calcium-dependent cell adhesion proteins. They preferentially interact with themselves in a homophilic manner in connecting cells; cadherins may thus contribute to the sorting of heterogeneous cell types. Ligand for integrins alpha-E/beta-7, ITGAE:ITGAB7, alpha-4/beta-7, ITGA4:ITGAB7 and alpha-4/beta-1, ITGA4:ITGAB1 through which modulates CD4(+) T cells activation. This is Cadherin-like protein 26 (Cdh26) from Mus musculus (Mouse).